We begin with the raw amino-acid sequence, 258 residues long: Enterotoxin type G (258 aa).

An N-terminal signal peptide occupies residues Met1 to Ala25. An intrachain disulfide couples Cys116 to Cys133.

It belongs to the staphylococcal/streptococcal toxin family.

It is found in the secreted. Staphylococcal enterotoxins cause the intoxication staphylococcal food poisoning syndrome. The illness is characterized by high fever, hypotension, diarrhea, shock, and in some cases death. The sequence is that of Enterotoxin type G (entG) from Staphylococcus aureus (strain N315).